The chain runs to 198 residues: Nucleoid occlusion factor SlmA (198 aa).

The region spanning 10 to 70 (NRREEILQSL…SLIEFIEDSL (61 aa)) is the HTH tetR-type domain. The H-T-H motif DNA-binding region spans 33-52 (TTAKLAASVGVSEAALYRHF). A coiled-coil region spans residues 117-144 (EQDRLQGRINQLFERIEAQLRQVLREKR).

Belongs to the nucleoid occlusion factor SlmA family. As to quaternary structure, homodimer. Interacts with FtsZ.

It localises to the cytoplasm. The protein resides in the nucleoid. Its function is as follows. Required for nucleoid occlusion (NO) phenomenon, which prevents Z-ring formation and cell division over the nucleoid. Acts as a DNA-associated cell division inhibitor that binds simultaneously chromosomal DNA and FtsZ, and disrupts the assembly of FtsZ polymers. SlmA-DNA-binding sequences (SBS) are dispersed on non-Ter regions of the chromosome, preventing FtsZ polymerization at these regions. In Salmonella typhi, this protein is Nucleoid occlusion factor SlmA.